The sequence spans 274 residues: Shikimate dehydrogenase (NADP(+)) (274 aa).

Shikimate is bound by residues Ser20–Ser22 and Thr68. Lys72 (proton acceptor) is an active-site residue. Asp84 serves as a coordination point for NADP(+). Residues Asn93 and Asp109 each contribute to the shikimate site. NADP(+)-binding positions include Gly131–Ala135 and Leu217. Residue Tyr219 coordinates shikimate. Residue Gly240 participates in NADP(+) binding.

It belongs to the shikimate dehydrogenase family. As to quaternary structure, homodimer.

It catalyses the reaction shikimate + NADP(+) = 3-dehydroshikimate + NADPH + H(+). The protein operates within metabolic intermediate biosynthesis; chorismate biosynthesis; chorismate from D-erythrose 4-phosphate and phosphoenolpyruvate: step 4/7. Its function is as follows. Involved in the biosynthesis of the chorismate, which leads to the biosynthesis of aromatic amino acids. Catalyzes the reversible NADPH linked reduction of 3-dehydroshikimate (DHSA) to yield shikimate (SA). The sequence is that of Shikimate dehydrogenase (NADP(+)) from Sphingopyxis alaskensis (strain DSM 13593 / LMG 18877 / RB2256) (Sphingomonas alaskensis).